We begin with the raw amino-acid sequence, 155 residues long: Ribonuclease H (155 aa).

Residues 5 to 146 (DQKPVIIHTD…ADQLARDGLT (142 aa)) form the RNase H type-1 domain. 4 residues coordinate Mg(2+): D14, E52, D74, and D138. The segment at 133–155 (ENERADQLARDGLTENRMKSRVK) is disordered.

The protein belongs to the RNase H family. Monomer. The cofactor is Mg(2+).

It localises to the cytoplasm. The enzyme catalyses Endonucleolytic cleavage to 5'-phosphomonoester.. Endonuclease that specifically degrades the RNA of RNA-DNA hybrids. The protein is Ribonuclease H of Rhodopseudomonas palustris (strain ATCC BAA-98 / CGA009).